A 251-amino-acid polypeptide reads, in one-letter code: Triosephosphate isomerase (251 aa).

9-11 contributes to the substrate binding site; it reads NWK. Catalysis depends on histidine 95, which acts as the Electrophile. Glutamate 167 serves as the catalytic Proton acceptor. Residues glycine 173, serine 212, and 233 to 234 each bind substrate; that span reads GG.

It belongs to the triosephosphate isomerase family. In terms of assembly, homodimer.

It localises to the cytoplasm. It carries out the reaction D-glyceraldehyde 3-phosphate = dihydroxyacetone phosphate. It participates in carbohydrate biosynthesis; gluconeogenesis. Its pathway is carbohydrate degradation; glycolysis; D-glyceraldehyde 3-phosphate from glycerone phosphate: step 1/1. Functionally, involved in the gluconeogenesis. Catalyzes stereospecifically the conversion of dihydroxyacetone phosphate (DHAP) to D-glyceraldehyde-3-phosphate (G3P). This is Triosephosphate isomerase from Pseudomonas syringae pv. syringae (strain B728a).